The sequence spans 79 residues: RNA-binding protein KhpA (79 aa).

The KH domain occupies 32–79 (FLEYHLNLDQSDVGRVIGRKGRTISAIRTIVYSVPTEYKKVRIVIDEK).

The protein belongs to the KhpA RNA-binding protein family. Forms a complex with KhpB. KhpA and KhpB colocalize throughout the cell cycle, with some increase at midcell in dividing cells.

The protein resides in the cytoplasm. In terms of biological role, a probable RNA chaperone. Forms a complex with KhpB which presumably binds to about 170 cellular RNAs (mRNA, tRNA intergenic RNA and sRNAs); the proteins alone each bind the same set of RNAs. A mutation in this gene suppresses the requirement for PBP2b (penA, a transpeptidase) in peripheral peptidoglycan (PG) synthesis. Probably plays a role in PG homeostasis and regulating peripheral PG synthesis. The sequence is that of RNA-binding protein KhpA from Streptococcus pneumoniae serotype 2 (strain D39 / NCTC 7466).